Consider the following 197-residue polypeptide: UPF0301 protein A2cp1_4106 (197 aa).

This sequence belongs to the UPF0301 (AlgH) family.

In Anaeromyxobacter dehalogenans (strain 2CP-1 / ATCC BAA-258), this protein is UPF0301 protein A2cp1_4106.